We begin with the raw amino-acid sequence, 931 residues long: Myelin regulatory factor homolog 1 (931 aa).

Topologically, residues 1-658 (MSSSDLLKGE…SCGSRLSQGT (658 aa)) are cytoplasmic. The segment at 29-143 (TDEDDGSMVS…QQHQQTRGGN (115 aa)) is disordered. The span at 37 to 52 (VSPTSSADSMHQNLGV) shows a compositional bias: polar residues. Residues 53–68 (QQQQQQMLQAQQRQNQ) show a composition bias toward low complexity. Positions 117 to 126 (DNGNQTMNNI) are enriched in polar residues. Positions 127–138 (QSQQLSQQQHQQ) are enriched in low complexity. The segment at residues 169–436 (GTAAVNQPTN…TNPGSFEPQD (268 aa)) is a DNA-binding region (NDT80). The 100-residue stretch at 483-582 (SDIRLKEAIT…RMTGDLDSKI (100 aa)) folds into the Peptidase S74 domain. A helical transmembrane segment spans residues 659–679 (VVTLVSIMAACLLAMSALYVL). The Lumenal segment spans residues 680–931 (DWHNRNYGYH…FYRMCTLSSS (252 aa)). N-linked (GlcNAc...) asparagine glycosylation is found at asparagine 797 and asparagine 912.

Belongs to the MRF family. In terms of assembly, homotrimer. Interacts with myrf-2. Interacts (via C-terminus) with pan-1 (via LRR regions); the interaction promotes the role of myrf-1 in the synaptic remodeling of DD GABAergic motor neurons at the cell membrane. In terms of processing, myelin regulatory factor: Follows autocatalytic cleavage via the peptidase S74 domain. Autoprocessing is apparently constitutive and is essential for transcriptional activity. In terms of tissue distribution, widely expressed in many tissues, including neuronal, muscle and epidermal stem cells. In neurons, expressed in dorsal D (DD) GABAergic motor neurons.

It localises to the endoplasmic reticulum membrane. It is found in the nucleus. The protein localises to the apical cell membrane. The protein resides in the cytoplasm. Constitutes a precursor of the transcription factor. Mediates the autocatalytic cleavage that releases the Myelin regulatory factor homolog 1, N-terminal component that specifically activates transcription of genes involved in synaptic rewiring during nervous system maturation. Functionally, membrane-bound part that has no transcription factor activity and remains attached to the endoplasmic reticulum membrane following cleavage. In terms of biological role, transcription factor that specifically activates expression of genes involved in synaptic rewiring during nervous system maturation. Specifically required for dorsal D (DD) GABAergic motor neurons synaptic rewiring. Acts in complex with myrf-2 paralog. The protein is Myelin regulatory factor homolog 1 of Caenorhabditis elegans.